The sequence spans 1143 residues: DNA polymerase II large subunit (1143 aa).

Belongs to the archaeal DNA polymerase II family. Heterodimer of a large subunit and a small subunit.

The enzyme catalyses DNA(n) + a 2'-deoxyribonucleoside 5'-triphosphate = DNA(n+1) + diphosphate. It catalyses the reaction Exonucleolytic cleavage in the 3'- to 5'-direction to yield nucleoside 5'-phosphates.. Possesses two activities: a DNA synthesis (polymerase) and an exonucleolytic activity that degrades single-stranded DNA in the 3'- to 5'-direction. Has a template-primer preference which is characteristic of a replicative DNA polymerase. The protein is DNA polymerase II large subunit (polC) of Archaeoglobus fulgidus (strain ATCC 49558 / DSM 4304 / JCM 9628 / NBRC 100126 / VC-16).